Consider the following 288-residue polypeptide: Hyaluronidase (288 aa).

A glycan (N-linked (GlcNAc...) asparagine) is linked at asparagine 36. The active-site Proton donor is glutamate 66. Cysteine 142 and cysteine 154 form a disulfide bridge. Residue asparagine 282 is glycosylated (N-linked (GlcNAc...) asparagine).

This sequence belongs to the glycosyl hydrolase 56 family. In terms of tissue distribution, expressed by the venom gland.

Its subcellular location is the secreted. It carries out the reaction Random hydrolysis of (1-&gt;4)-linkages between N-acetyl-beta-D-glucosamine and D-glucuronate residues in hyaluronate.. In terms of biological role, hydrolyzes high molecular weight hyaluronic acid to produce small oligosaccharides. The sequence is that of Hyaluronidase from Polybia paulista (Neotropical social wasp).